The following is a 752-amino-acid chain: Photosystem I P700 chlorophyll a apoprotein A1 (752 aa).

8 consecutive transmembrane segments (helical) span residues 73 to 96 (IFSA…FHGA), 159 to 182 (LYCT…FHYH), 198 to 222 (MNHH…HLSL), 294 to 312 (TAHH…GHMY), 349 to 372 (WHAQ…HHMY), 388 to 414 (LSLF…IFMV), 436 to 458 (AIVS…LYIH), and 533 to 551 (FMVH…LILV). [4Fe-4S] cluster-binding residues include Cys575 and Cys584. 2 consecutive transmembrane segments (helical) span residues 591–612 (HVFL…HFSW) and 666–688 (LSAY…MFLF). Residue His677 participates in chlorophyll a' binding. Chlorophyll a-binding residues include Met685 and Tyr693. Trp694 contributes to the phylloquinone binding site. The helical transmembrane segment at 726–746 (AVGVAHYLLGGIGTTWAFFLA) threads the bilayer.

The protein belongs to the PsaA/PsaB family. In terms of assembly, the PsaA/B heterodimer binds the P700 chlorophyll special pair and subsequent electron acceptors. PSI consists of a core antenna complex that captures photons, and an electron transfer chain that converts photonic excitation into a charge separation. The eukaryotic PSI reaction center is composed of at least 11 subunits. The cofactor is P700 is a chlorophyll a/chlorophyll a' dimer, A0 is one or more chlorophyll a, A1 is one or both phylloquinones and FX is a shared 4Fe-4S iron-sulfur center..

It is found in the plastid. It localises to the chloroplast thylakoid membrane. The catalysed reaction is reduced [plastocyanin] + hnu + oxidized [2Fe-2S]-[ferredoxin] = oxidized [plastocyanin] + reduced [2Fe-2S]-[ferredoxin]. In terms of biological role, psaA and PsaB bind P700, the primary electron donor of photosystem I (PSI), as well as the electron acceptors A0, A1 and FX. PSI is a plastocyanin/cytochrome c6-ferredoxin oxidoreductase, converting photonic excitation into a charge separation, which transfers an electron from the donor P700 chlorophyll pair to the spectroscopically characterized acceptors A0, A1, FX, FA and FB in turn. Oxidized P700 is reduced on the lumenal side of the thylakoid membrane by plastocyanin or cytochrome c6. In Porphyra purpurea (Red seaweed), this protein is Photosystem I P700 chlorophyll a apoprotein A1.